A 288-amino-acid chain; its full sequence is Homoserine kinase (288 aa).

An ATP-binding site is contributed by 78 to 88 (PLARGLGSSSS).

It belongs to the GHMP kinase family. Homoserine kinase subfamily.

The protein resides in the cytoplasm. The catalysed reaction is L-homoserine + ATP = O-phospho-L-homoserine + ADP + H(+). Its pathway is amino-acid biosynthesis; L-threonine biosynthesis; L-threonine from L-aspartate: step 4/5. Its function is as follows. Catalyzes the ATP-dependent phosphorylation of L-homoserine to L-homoserine phosphate. The polypeptide is Homoserine kinase (Streptococcus mutans serotype c (strain ATCC 700610 / UA159)).